The sequence spans 425 residues: ADP-ribose glycohydrolase MACROD2 (425 aa).

The region spanning 59 to 240 (QETSQVKKSL…IYKKKMNEFF (182 aa)) is the Macro domain. Substrate is bound by residues 77 to 79 (GDI), 90 to 92 (AAN), and 97 to 102 (GGGGVD). Lys170 is covalently cross-linked (Glycyl lysine isopeptide (Lys-Gly) (interchain with G-Cter in ubiquitin)). Substrate-binding positions include 185–191 (ISTGIYG) and Phe224. The disordered stretch occupies residues 243–425 (DDNNEEEEDV…EAKEQRNGTK (183 aa)). Residues 244–262 (DNNEEEEDVEMKEDSDENG) show a composition bias toward acidic residues. Residues 302-343 (EDFAKDENITKGGEVTDHSVRDQDHPDGQENDSTKNEIKIET) show a composition bias toward basic and acidic residues. Polar residues predominate over residues 344 to 360 (ESQSSYMETEELSSNQE). Basic and acidic residues-rich tracts occupy residues 381–391 (EGEKAPGEDTP) and 415–425 (DEAKEQRNGTK).

Belongs to the MacroD-type family. MacroD1/2-like subfamily. Interacts with ADP-ribosylated PARP1.

It is found in the nucleus. The catalysed reaction is 2''-O-acetyl-ADP-D-ribose + H2O = ADP-D-ribose + acetate + H(+). The enzyme catalyses 4-O-(ADP-D-ribosyl)-L-aspartyl-[protein] + H2O = L-aspartyl-[protein] + ADP-D-ribose + H(+). It carries out the reaction 5-O-(ADP-D-ribosyl)-L-glutamyl-[protein] + H2O = L-glutamyl-[protein] + ADP-D-ribose + H(+). It catalyses the reaction alpha-NAD(+) + H2O = ADP-D-ribose + nicotinamide + H(+). Its activity is regulated as follows. Subject to product inhibition by ADP-ribose. Functionally, removes ADP-ribose from aspartate and glutamate residues in proteins bearing a single ADP-ribose moiety. Inactive towards proteins bearing poly-ADP-ribose. Deacetylates O-acetyl-ADP ribose, a signaling molecule generated by the deacetylation of acetylated lysine residues in histones and other proteins. This chain is ADP-ribose glycohydrolase MACROD2, found in Homo sapiens (Human).